Reading from the N-terminus, the 413-residue chain is Probable elongation factor 1-gamma 2 (413 aa).

The GST N-terminal domain occupies 1-82; it reads MALVMHTYKG…YVSRKNGDNS (82 aa). The GST C-terminal domain occupies 87–215; sequence SLIEYAHIEQ…AKQTEAVPPV (129 aa). The tract at residues 207-260 is disordered; it reads KQTEAVPPVPTKKAPQPAKPKEEPKKAAPVAEAPKPAEEEEAPKPKAKNPLDLL. Residues 253-413 enclose the EF-1-gamma C-terminal domain; sequence AKNPLDLLPP…EALLDAKCFK (161 aa).

EF-1 is composed of four subunits: alpha, beta, delta, and gamma.

Functionally, probably plays a role in anchoring the complex to other cellular components. The polypeptide is Probable elongation factor 1-gamma 2 (Arabidopsis thaliana (Mouse-ear cress)).